We begin with the raw amino-acid sequence, 152 residues long: Deoxyuridine 5'-triphosphate nucleotidohydrolase (152 aa).

Residues 71-73, asparagine 84, 88-90, and methionine 98 contribute to the substrate site; these read RSG and LID.

It belongs to the dUTPase family. The cofactor is Mg(2+).

It catalyses the reaction dUTP + H2O = dUMP + diphosphate + H(+). It functions in the pathway pyrimidine metabolism; dUMP biosynthesis; dUMP from dCTP (dUTP route): step 2/2. Functionally, this enzyme is involved in nucleotide metabolism: it produces dUMP, the immediate precursor of thymidine nucleotides and it decreases the intracellular concentration of dUTP so that uracil cannot be incorporated into DNA. This Shewanella sp. (strain ANA-3) protein is Deoxyuridine 5'-triphosphate nucleotidohydrolase.